Consider the following 118-residue polypeptide: Large ribosomal subunit protein bL20 (118 aa).

This sequence belongs to the bacterial ribosomal protein bL20 family.

Functionally, binds directly to 23S ribosomal RNA and is necessary for the in vitro assembly process of the 50S ribosomal subunit. It is not involved in the protein synthesizing functions of that subunit. The chain is Large ribosomal subunit protein bL20 from Sulfurovum sp. (strain NBC37-1).